The primary structure comprises 156 residues: uncharacterized protein (156 aa).

This sequence belongs to the mimivirus L223/L227/L812 family.

This is an uncharacterized protein from Acanthamoeba polyphaga mimivirus (APMV).